The primary structure comprises 185 residues: dTTP/UTP pyrophosphatase (185 aa).

D64 acts as the Proton acceptor in catalysis.

Belongs to the Maf family. YhdE subfamily. The cofactor is a divalent metal cation.

Its subcellular location is the cytoplasm. The catalysed reaction is dTTP + H2O = dTMP + diphosphate + H(+). It catalyses the reaction UTP + H2O = UMP + diphosphate + H(+). Functionally, nucleoside triphosphate pyrophosphatase that hydrolyzes dTTP and UTP. May have a dual role in cell division arrest and in preventing the incorporation of modified nucleotides into cellular nucleic acids. The protein is dTTP/UTP pyrophosphatase of Thermococcus gammatolerans (strain DSM 15229 / JCM 11827 / EJ3).